A 334-amino-acid chain; its full sequence is Malate dehydrogenase (334 aa).

17 to 23 (GAAGQIG) contacts NAD(+). Residues Arg98 and Arg104 each coordinate substrate. Residues Asn111, Gln118, and 135-137 (VGN) each bind NAD(+). The substrate site is built by Asn137 and Arg168. His193 functions as the Proton acceptor in the catalytic mechanism.

This sequence belongs to the LDH/MDH superfamily. MDH type 2 family.

It carries out the reaction (S)-malate + NAD(+) = oxaloacetate + NADH + H(+). Catalyzes the reversible oxidation of malate to oxaloacetate. The chain is Malate dehydrogenase from Deinococcus geothermalis (strain DSM 11300 / CIP 105573 / AG-3a).